Here is a 346-residue protein sequence, read N- to C-terminus: Holliday junction branch migration complex subunit RuvB (346 aa).

The interval methionine 1–tyrosine 182 is large ATPase domain (RuvB-L). ATP contacts are provided by residues isoleucine 21, arginine 22, glycine 63, lysine 66, threonine 67, threonine 68, glutamate 129–phenylalanine 131, arginine 172, tyrosine 182, and arginine 219. Threonine 67 lines the Mg(2+) pocket. The segment at proline 183 to glutamate 253 is small ATPAse domain (RuvB-S). The head domain (RuvB-H) stretch occupies residues glutamate 256–arginine 346. 2 residues coordinate DNA: arginine 311 and arginine 316.

This sequence belongs to the RuvB family. Homohexamer. Forms an RuvA(8)-RuvB(12)-Holliday junction (HJ) complex. HJ DNA is sandwiched between 2 RuvA tetramers; dsDNA enters through RuvA and exits via RuvB. An RuvB hexamer assembles on each DNA strand where it exits the tetramer. Each RuvB hexamer is contacted by two RuvA subunits (via domain III) on 2 adjacent RuvB subunits; this complex drives branch migration. In the full resolvosome a probable DNA-RuvA(4)-RuvB(12)-RuvC(2) complex forms which resolves the HJ.

Its subcellular location is the cytoplasm. It carries out the reaction ATP + H2O = ADP + phosphate + H(+). The RuvA-RuvB-RuvC complex processes Holliday junction (HJ) DNA during genetic recombination and DNA repair, while the RuvA-RuvB complex plays an important role in the rescue of blocked DNA replication forks via replication fork reversal (RFR). RuvA specifically binds to HJ cruciform DNA, conferring on it an open structure. The RuvB hexamer acts as an ATP-dependent pump, pulling dsDNA into and through the RuvAB complex. RuvB forms 2 homohexamers on either side of HJ DNA bound by 1 or 2 RuvA tetramers; 4 subunits per hexamer contact DNA at a time. Coordinated motions by a converter formed by DNA-disengaged RuvB subunits stimulates ATP hydrolysis and nucleotide exchange. Immobilization of the converter enables RuvB to convert the ATP-contained energy into a lever motion, pulling 2 nucleotides of DNA out of the RuvA tetramer per ATP hydrolyzed, thus driving DNA branch migration. The RuvB motors rotate together with the DNA substrate, which together with the progressing nucleotide cycle form the mechanistic basis for DNA recombination by continuous HJ branch migration. Branch migration allows RuvC to scan DNA until it finds its consensus sequence, where it cleaves and resolves cruciform DNA. This chain is Holliday junction branch migration complex subunit RuvB, found in Chlorobium phaeobacteroides (strain DSM 266 / SMG 266 / 2430).